The primary structure comprises 148 residues: MRKSKEKGRSGSTRPPQLKKPEWVKMRPEEVEELVVSLYRKGYPPSMIGVILRDQYGIPMVKAVTGKSVLQILRERGLAPEIPEDLMNLMKRAIRVRKHLEEHPKDYHSKRGLQLIESKIHRLVKYYKREGILPPDWKYEPSKIALYT.

The tract at residues 1-23 (MRKSKEKGRSGSTRPPQLKKPEW) is disordered.

It belongs to the universal ribosomal protein uS15 family. In terms of assembly, part of the 30S ribosomal subunit.

This chain is Small ribosomal subunit protein uS15, found in Thermofilum pendens (strain DSM 2475 / Hrk 5).